The sequence spans 1044 residues: Ras GTPase-activating protein 1 (1044 aa).

Position 1 is an N-acetylmethionine (Met1). The segment at 1–160 (MMAAEAGGEE…DEGDSLDGPE (160 aa)) is hydrophobic. The region spanning 178 to 269 (WYHGKLDRTI…LKGEKLLYPV (92 aa)) is the SH2 1 domain. The region spanning 276-338 (EDRRRVRAIL…VEDLVEEVGR (63 aa)) is the SH3 domain. In terms of domain architecture, SH2 2 spans 348 to 438 (WFHGKISKQE…VEGYYLKEPV (91 aa)). A PH domain is found at 471 to 574 (NIVKKGYLLK…WMKGLQAFCN (104 aa)). One can recognise a C2 domain in the interval 574–687 (NLRKSSPGTS…QKGHATDEWF (114 aa)). Tyr612 carries the post-translational modification Phosphotyrosine. 2 consecutive repeats follow at residues 646-664 (PDIN…KSKD) and 665-683 (PDIL…GHAT). Residues 761–971 (KLESLLLCTL…HRMIMFLDEL (211 aa)) enclose the Ras-GAP domain. A Phosphoserine modification is found at Ser828.

As to quaternary structure, interacts with SQSTM1. Interacts with SPSB1; the interaction does not promote degradation. Interacts with CAV2 (tyrosine phosphorylated form). Directly interacts with NCK1. Interacts with PDGFRB (tyrosine phosphorylated). Interacts (via SH2 domain) with the 'Tyr-9' phosphorylated form of PDPK1. Interacts with tyrosine-phosphorylated EPHB4. Post-translationally, phosphorylated by SRC and LCK. The phosphorylation SRC inhibits its ability to stimulate the Ras-GTPase activity, whereas phosphorylation by LCK does not display any effect on stimulation activity.

Its subcellular location is the cytoplasm. Its function is as follows. Inhibitory regulator of the Ras-cyclic AMP pathway. Stimulates the GTPase of normal but not oncogenic Ras p21. This Bos taurus (Bovine) protein is Ras GTPase-activating protein 1 (RASA1).